Consider the following 345-residue polypeptide: Phosphoribosylformylglycinamidine cyclo-ligase (345 aa).

Belongs to the AIR synthase family.

Its subcellular location is the cytoplasm. It carries out the reaction 2-formamido-N(1)-(5-O-phospho-beta-D-ribosyl)acetamidine + ATP = 5-amino-1-(5-phospho-beta-D-ribosyl)imidazole + ADP + phosphate + H(+). The protein operates within purine metabolism; IMP biosynthesis via de novo pathway; 5-amino-1-(5-phospho-D-ribosyl)imidazole from N(2)-formyl-N(1)-(5-phospho-D-ribosyl)glycinamide: step 2/2. In Shewanella baltica (strain OS223), this protein is Phosphoribosylformylglycinamidine cyclo-ligase.